Consider the following 546-residue polypeptide: 5'-nucleotidase domain-containing protein 3 (546 aa).

Aspartate 100 acts as the Nucleophile in catalysis. Mg(2+) is bound by residues aspartate 100 and aspartate 102. Aspartate 102 acts as the Proton donor in catalysis. Position 249–257 (249–257 (KDSIRDVHI)) interacts with substrate. Aspartate 387 is a binding site for Mg(2+).

It belongs to the 5'(3')-deoxyribonucleotidase family. Mg(2+) is required as a cofactor.

This chain is 5'-nucleotidase domain-containing protein 3 (Nt5dc3), found in Mus musculus (Mouse).